A 117-amino-acid polypeptide reads, in one-letter code: Cysteine rich necrotrophic effector Tox1 (117 aa).

The N-terminal stretch at 1–17 (MKLTMVLSVAFATLTFA) is a signal peptide. 8 disulfide bridges follow: C36–C87, C44–C55, C53–C58, C54–C98, C63–C83, C67–C117, C86–C97, and C107–C110. Residues 87–117 (CNAGGESHELCCSIASAGIDCNPCTAGLRMC) form a chitin-binding domain region.

As to quaternary structure, interacts with host cell wall-associated kinase receptor Snn1.

Its subcellular location is the secreted. Its function is as follows. Necrotrophic effector that plays a critical role during fungal penetration, via its interaction with the host Snn1 protein. Snn1 is a member of the wall-associated kinase class of receptors, which are known to drive pathways for biotrophic pathogen resistance. Recognition of Tox1 by Snn1 induces mitogen-activated protein kinase genes such as MAPK3 and activates programmed cell death, which allows this necrotroph to gain nutrients and sporulate. Recognition of Tox1 by Snn1 also induces other plant defense responses, including oxidative burst and pathogenesis related (PR) gene expression. The development of necrosis and disease induced by Tox1, and particularly penetration during infection, requires light, which is probably related to the light-dependent expression of host Snn1. Tox1 plays an additional role in providing significant protection from wheat chitinases by binding chitin in the fungal cell wall. The polypeptide is Cysteine rich necrotrophic effector Tox1 (Phaeosphaeria nodorum (strain SN15 / ATCC MYA-4574 / FGSC 10173) (Glume blotch fungus)).